A 576-amino-acid polypeptide reads, in one-letter code: 2-succinyl-5-enolpyruvyl-6-hydroxy-3-cyclohexene-1-carboxylate synthase (576 aa).

It belongs to the TPP enzyme family. MenD subfamily. Homodimer. Mg(2+) serves as cofactor. The cofactor is Mn(2+). Thiamine diphosphate is required as a cofactor.

The catalysed reaction is isochorismate + 2-oxoglutarate + H(+) = 5-enolpyruvoyl-6-hydroxy-2-succinyl-cyclohex-3-ene-1-carboxylate + CO2. The protein operates within quinol/quinone metabolism; 1,4-dihydroxy-2-naphthoate biosynthesis; 1,4-dihydroxy-2-naphthoate from chorismate: step 2/7. It functions in the pathway quinol/quinone metabolism; menaquinone biosynthesis. Functionally, catalyzes the thiamine diphosphate-dependent decarboxylation of 2-oxoglutarate and the subsequent addition of the resulting succinic semialdehyde-thiamine pyrophosphate anion to isochorismate to yield 2-succinyl-5-enolpyruvyl-6-hydroxy-3-cyclohexene-1-carboxylate (SEPHCHC). This is 2-succinyl-5-enolpyruvyl-6-hydroxy-3-cyclohexene-1-carboxylate synthase from Photobacterium profundum (strain SS9).